The sequence spans 321 residues: Ribosomal RNA small subunit methyltransferase H (321 aa).

S-adenosyl-L-methionine contacts are provided by residues 40-42, Asp60, Phe84, Asp106, and Gln113; that span reads GGH.

Belongs to the methyltransferase superfamily. RsmH family.

Its subcellular location is the cytoplasm. The enzyme catalyses cytidine(1402) in 16S rRNA + S-adenosyl-L-methionine = N(4)-methylcytidine(1402) in 16S rRNA + S-adenosyl-L-homocysteine + H(+). In terms of biological role, specifically methylates the N4 position of cytidine in position 1402 (C1402) of 16S rRNA. This Haemophilus influenzae (strain PittEE) protein is Ribosomal RNA small subunit methyltransferase H.